The chain runs to 338 residues: Ketol-acid reductoisomerase (NADP(+)) (338 aa).

In terms of domain architecture, KARI N-terminal Rossmann spans 1 to 181 (MKVYYDKDAD…GGTKGGVIET (181 aa)). Residues 24–27 (YGSQ), Arg47, and Ser52 each bind NADP(+). His107 is a catalytic residue. Gly133 lines the NADP(+) pocket. The region spanning 182–327 (NFREETETDL…SQLRAMMPWI (146 aa)) is the KARI C-terminal knotted domain. Residues Asp190, Glu194, Glu226, and Glu230 each coordinate Mg(2+). Position 251 (Ser251) interacts with substrate.

Belongs to the ketol-acid reductoisomerase family. The cofactor is Mg(2+).

It catalyses the reaction (2R)-2,3-dihydroxy-3-methylbutanoate + NADP(+) = (2S)-2-acetolactate + NADPH + H(+). The catalysed reaction is (2R,3R)-2,3-dihydroxy-3-methylpentanoate + NADP(+) = (S)-2-ethyl-2-hydroxy-3-oxobutanoate + NADPH + H(+). It participates in amino-acid biosynthesis; L-isoleucine biosynthesis; L-isoleucine from 2-oxobutanoate: step 2/4. Its pathway is amino-acid biosynthesis; L-valine biosynthesis; L-valine from pyruvate: step 2/4. Involved in the biosynthesis of branched-chain amino acids (BCAA). Catalyzes an alkyl-migration followed by a ketol-acid reduction of (S)-2-acetolactate (S2AL) to yield (R)-2,3-dihydroxy-isovalerate. In the isomerase reaction, S2AL is rearranged via a Mg-dependent methyl migration to produce 3-hydroxy-3-methyl-2-ketobutyrate (HMKB). In the reductase reaction, this 2-ketoacid undergoes a metal-dependent reduction by NADPH to yield (R)-2,3-dihydroxy-isovalerate. This chain is Ketol-acid reductoisomerase (NADP(+)), found in Methylobacillus flagellatus (strain ATCC 51484 / DSM 6875 / VKM B-1610 / KT).